We begin with the raw amino-acid sequence, 296 residues long: Cytidine deaminase (296 aa).

CMP/dCMP-type deaminase domains lie at 47–167 (TEAE…FGPK) and 186–296 (DSSD…VDPV). Residue 88–90 (NLE) participates in substrate binding. Residue histidine 101 coordinates Zn(2+). Glutamate 103 acts as the Proton donor in catalysis. Zn(2+)-binding residues include cysteine 128 and cysteine 131.

This sequence belongs to the cytidine and deoxycytidylate deaminase family. As to quaternary structure, homodimer. Zn(2+) serves as cofactor.

It carries out the reaction cytidine + H2O + H(+) = uridine + NH4(+). It catalyses the reaction 2'-deoxycytidine + H2O + H(+) = 2'-deoxyuridine + NH4(+). In terms of biological role, this enzyme scavenges exogenous and endogenous cytidine and 2'-deoxycytidine for UMP synthesis. This is Cytidine deaminase from Shewanella sp. (strain MR-7).